Here is a 584-residue protein sequence, read N- to C-terminus: Ubiquitin-like-specific protease 1D (584 aa).

2 disordered regions span residues 28–64 and 99–323; these read DKEDEVPELEIVNTTKPTPPPPPTFFSDDQTDSPKLL and DLEE…QAAE. Residues 99 to 120 show a composition bias toward basic and acidic residues; sequence DLEEEKQRRVLEGSKMEVDRSS. Residues 121-132 are compositionally biased toward low complexity; it reads KVVSSTSSGSDV. Composition is skewed to basic and acidic residues over residues 142-165 and 176-196; these read DTSRGNADSKDTSRQGNADSKEVS and PKTDSQSKKAFGKELEDLGCE. Positions 197-207 are enriched in basic residues; the sequence is RRKHKAGRKPV. A compositionally biased stretch (basic and acidic residues) spans 221-253; that stretch reads GKAEHSAKQFDSGLKESKGNKKSKEPYGKKRPM. The segment covering 261 to 274 has biased composition (acidic residues); it reads IDDDDDDDDDDDND. The segment covering 275–286 has biased composition (basic and acidic residues); the sequence is TSGHETPREWSW. Active-site residues include His438, Asp461, and Cys525.

This sequence belongs to the peptidase C48 family.

It localises to the nucleus speckle. Functionally, protease that catalyzes two essential functions in the SUMO pathway: processing of full-length SUMOs to their mature forms and deconjugation of SUMO from targeted proteins. Cleaves precursors of SUM1 and SUM2, but not of SUM3 or SUM5. Able to release SUM1 and SUM2 from conjugates, but unable to cleave SUM3. Protease activity mainly directed at deconjugating SUM1 and SUM2 from their target proteins. Regulates salt stress responses and flowering time. Redundant with ULP1C. The polypeptide is Ubiquitin-like-specific protease 1D (ULP1D) (Arabidopsis thaliana (Mouse-ear cress)).